The chain runs to 185 residues: Transcription termination/antitermination protein NusG (185 aa).

The KOW domain maps to 134-162 (PGQMVRVIDGPFNDFDGLVEEVNYEKNRL).

Belongs to the NusG family.

Its function is as follows. Participates in transcription elongation, termination and antitermination. The protein is Transcription termination/antitermination protein NusG of Xylella fastidiosa (strain Temecula1 / ATCC 700964).